The sequence spans 419 residues: MKFTHPLDYYRLNGKQILWYMNIGEDQDSQASNYFPSVKDPQSEKIVVQQEQQLLFLARPQDTVFFHTMPEQAFLDYWKERRLSLPSIICCDKLSQVPDLERYTIIPFIVSDQLLELKRRYPHMDIIAPDLAVCREINHKFNTRRLMERNGFNVTTGYFCSDIESLEHAYEQLISAGFSKCVLKVPYGSSGKGLKVIDNERNFRFLLNYIQNRQTNVDLLLEGWHPHRLSLTSQLFITEYEVHLLAVTEQIIDPNGVYKGTNFTPALSQSEAADYREEILRAGELIRQMGYRGVLGIDSILDTNGELIPVIEINARLTQVTYILPLVIEQKKRYEFVESRVLVFNSRADLDFEDYENDLSEVTRDLPVRIDLYNFCKASGAFKNTYKLFVLVSAHNSEQLIKARSLLDELNTKMTTAVH.

The region spanning 144 to 345 (RRLMERNGFN…FVESRVLVFN (202 aa)) is the ATP-grasp domain. 174–231 (ISAGFSKCVLKVPYGSSGKGLKVIDNERNFRFLLNYIQNRQTNVDLLLEGWHPHRLSL) contributes to the ATP binding site. Asp298, Glu312, and Asn314 together coordinate Mg(2+). 3 residues coordinate Mn(2+): Asp298, Glu312, and Asn314.

Monomer. It depends on Mg(2+) as a cofactor. Mn(2+) serves as cofactor.

It catalyses the reaction holo-[BtrI ACP] + L-glutamate + ATP = gamma-L-glutamyl-[BtrI ACP] + ADP + phosphate. The catalysed reaction is 4-aminobutanoyl-[BtrI ACP] + L-glutamate + ATP = 4-(gamma-L-glutamylamino)butanoyl-[BtrI ACP] + ADP + phosphate + H(+). It participates in antibiotic biosynthesis; butirosin biosynthesis. ATP-dependent ligase that catalyzes 2 steps in the biosynthesis of the side chain of the aminoglycoside antibiotics in the biosynthetic pathway of butirosin. Mediates the addition of one molecule of L-glutamate to a dedicated acyl-carrier protein. Following decarboxylation of the product by BtrK, adds a second L-glutamate molecule. In Niallia circulans (Bacillus circulans), this protein is [Butirosin acyl-carrier protein]--L-glutamate ligase (btrJ).